Consider the following 361-residue polypeptide: 3-dehydroquinate synthase (361 aa).

Residues 72-77 (SGEKEK), 130-131 (TT), Lys142, and Lys151 contribute to the NAD(+) site. 3 residues coordinate Zn(2+): Glu184, His247, and His264.

This sequence belongs to the sugar phosphate cyclases superfamily. Dehydroquinate synthase family. It depends on Co(2+) as a cofactor. Zn(2+) serves as cofactor. NAD(+) is required as a cofactor.

It localises to the cytoplasm. It catalyses the reaction 7-phospho-2-dehydro-3-deoxy-D-arabino-heptonate = 3-dehydroquinate + phosphate. It participates in metabolic intermediate biosynthesis; chorismate biosynthesis; chorismate from D-erythrose 4-phosphate and phosphoenolpyruvate: step 2/7. Its function is as follows. Catalyzes the conversion of 3-deoxy-D-arabino-heptulosonate 7-phosphate (DAHP) to dehydroquinate (DHQ). In Bacillus cereus (strain ATCC 10987 / NRS 248), this protein is 3-dehydroquinate synthase.